The chain runs to 602 residues: Aspartate--tRNA(Asp/Asn) ligase (602 aa).

Glu-175 is an L-aspartate binding site. The segment at Gln-199–Lys-202 is aspartate. Arg-221 is an L-aspartate binding site. ATP-binding positions include Arg-221 to Glu-223 and Gln-230. His-458 contacts L-aspartate. Glu-492 contributes to the ATP binding site. Position 499 (Arg-499) interacts with L-aspartate. Gly-544–Arg-547 serves as a coordination point for ATP.

It belongs to the class-II aminoacyl-tRNA synthetase family. Type 1 subfamily. Homodimer.

The protein resides in the cytoplasm. The enzyme catalyses tRNA(Asx) + L-aspartate + ATP = L-aspartyl-tRNA(Asx) + AMP + diphosphate. Its function is as follows. Aspartyl-tRNA synthetase with relaxed tRNA specificity since it is able to aspartylate not only its cognate tRNA(Asp) but also tRNA(Asn). Reaction proceeds in two steps: L-aspartate is first activated by ATP to form Asp-AMP and then transferred to the acceptor end of tRNA(Asp/Asn). This is Aspartate--tRNA(Asp/Asn) ligase from Cupriavidus necator (strain ATCC 17699 / DSM 428 / KCTC 22496 / NCIMB 10442 / H16 / Stanier 337) (Ralstonia eutropha).